Here is a 235-residue protein sequence, read N- to C-terminus: Large ribosomal subunit protein uL1 (235 aa).

The protein belongs to the universal ribosomal protein uL1 family. Part of the 50S ribosomal subunit.

Functionally, binds directly to 23S rRNA. The L1 stalk is quite mobile in the ribosome, and is involved in E site tRNA release. Its function is as follows. Protein L1 is also a translational repressor protein, it controls the translation of the L11 operon by binding to its mRNA. This is Large ribosomal subunit protein uL1 from Mycolicibacterium paratuberculosis (strain ATCC BAA-968 / K-10) (Mycobacterium paratuberculosis).